A 299-amino-acid chain; its full sequence is Porphobilinogen deaminase (299 aa).

An S-(dipyrrolylmethanemethyl)cysteine modification is found at C234.

It belongs to the HMBS family. Monomer. Dipyrromethane is required as a cofactor.

The catalysed reaction is 4 porphobilinogen + H2O = hydroxymethylbilane + 4 NH4(+). It functions in the pathway porphyrin-containing compound metabolism; protoporphyrin-IX biosynthesis; coproporphyrinogen-III from 5-aminolevulinate: step 2/4. Functionally, tetrapolymerization of the monopyrrole PBG into the hydroxymethylbilane pre-uroporphyrinogen in several discrete steps. This is Porphobilinogen deaminase from Corynebacterium efficiens (strain DSM 44549 / YS-314 / AJ 12310 / JCM 11189 / NBRC 100395).